A 617-amino-acid chain; its full sequence is Proline--tRNA ligase (617 aa).

This sequence belongs to the class-II aminoacyl-tRNA synthetase family. ProS type 1 subfamily. As to quaternary structure, homodimer.

The protein resides in the cytoplasm. The catalysed reaction is tRNA(Pro) + L-proline + ATP = L-prolyl-tRNA(Pro) + AMP + diphosphate. In terms of biological role, catalyzes the attachment of proline to tRNA(Pro) in a two-step reaction: proline is first activated by ATP to form Pro-AMP and then transferred to the acceptor end of tRNA(Pro). As ProRS can inadvertently accommodate and process non-cognate amino acids such as alanine and cysteine, to avoid such errors it has two additional distinct editing activities against alanine. One activity is designated as 'pretransfer' editing and involves the tRNA(Pro)-independent hydrolysis of activated Ala-AMP. The other activity is designated 'posttransfer' editing and involves deacylation of mischarged Ala-tRNA(Pro). The misacylated Cys-tRNA(Pro) is not edited by ProRS. This is Proline--tRNA ligase from Streptococcus pneumoniae (strain CGSP14).